An 84-amino-acid chain; its full sequence is Cytochrome b559 subunit alpha (84 aa).

Residues 22–36 (VIHSITIPALFVAGW) form a helical membrane-spanning segment. Heme is bound at residue His-24.

This sequence belongs to the PsbE/PsbF family. In terms of assembly, heterodimer of an alpha subunit and a beta subunit. PSII is composed of 1 copy each of membrane proteins PsbA, PsbB, PsbC, PsbD, PsbE, PsbF, PsbH, PsbI, PsbJ, PsbK, PsbL, PsbM, PsbT, PsbX, PsbY, PsbZ, Psb30/Ycf12, at least 3 peripheral proteins of the oxygen-evolving complex and a large number of cofactors. It forms dimeric complexes. It depends on heme b as a cofactor.

Its subcellular location is the plastid. It localises to the chloroplast thylakoid membrane. This b-type cytochrome is tightly associated with the reaction center of photosystem II (PSII). PSII is a light-driven water:plastoquinone oxidoreductase that uses light energy to abstract electrons from H(2)O, generating O(2) and a proton gradient subsequently used for ATP formation. It consists of a core antenna complex that captures photons, and an electron transfer chain that converts photonic excitation into a charge separation. The protein is Cytochrome b559 subunit alpha of Porphyra purpurea (Red seaweed).